The sequence spans 220 residues: Outer membrane protein assembly factor BamD (220 aa).

The signal sequence occupies residues 1–22; it reads MRLKHFKTFLFITMAIIVIGTG. Residue Cys23 is the site of N-palmitoyl cysteine attachment. Cys23 carries the S-diacylglycerol cysteine lipid modification.

The protein belongs to the BamD family. In terms of assembly, part of the Bam complex.

It is found in the cell outer membrane. Its function is as follows. Part of the outer membrane protein assembly complex, which is involved in assembly and insertion of beta-barrel proteins into the outer membrane. This Helicobacter pylori (strain ATCC 700392 / 26695) (Campylobacter pylori) protein is Outer membrane protein assembly factor BamD.